We begin with the raw amino-acid sequence, 303 residues long: Oxygen-dependent coproporphyrinogen-III oxidase (303 aa).

A substrate-binding site is contributed by Ser-93. The a divalent metal cation site is built by His-97 and His-107. His-107 serves as the catalytic Proton donor. 109-111 (NVR) serves as a coordination point for substrate. Residues His-149 and His-179 each contribute to the a divalent metal cation site. The segment at 244–279 (YVEFNLVFDRGTLFGLQSGGRTESILLSMPPMAQWR) is important for dimerization. Position 262-264 (262-264 (GGR)) interacts with substrate.

This sequence belongs to the aerobic coproporphyrinogen-III oxidase family. As to quaternary structure, homodimer. A divalent metal cation serves as cofactor.

The protein resides in the cytoplasm. The catalysed reaction is coproporphyrinogen III + O2 + 2 H(+) = protoporphyrinogen IX + 2 CO2 + 2 H2O. The protein operates within porphyrin-containing compound metabolism; protoporphyrin-IX biosynthesis; protoporphyrinogen-IX from coproporphyrinogen-III (O2 route): step 1/1. Involved in the heme biosynthesis. Catalyzes the aerobic oxidative decarboxylation of propionate groups of rings A and B of coproporphyrinogen-III to yield the vinyl groups in protoporphyrinogen-IX. The polypeptide is Oxygen-dependent coproporphyrinogen-III oxidase (Bordetella petrii (strain ATCC BAA-461 / DSM 12804 / CCUG 43448)).